The chain runs to 3095 residues: Centrosome-associated protein 350 (3095 aa).

2 disordered regions span residues 1 to 24 (MRSS…ETIQ) and 63 to 105 (TKKS…RSPL). The segment covering 14 to 24 (PRNSQSKETIQ) has biased composition (polar residues). Ser84 and Ser140 each carry phosphoserine. Disordered regions lie at residues 219–239 (DEMP…LNNM), 251–272 (SDSS…KRQQ), and 430–493 (KILG…RAWS). Positions 228 to 238 (SENNSKPSLNN) are enriched in polar residues. Residues 251–265 (SDSSPSSSACNSQRS) show a composition bias toward low complexity. Basic and acidic residues-rich tracts occupy residues 438–457 (MEQK…ERVA) and 464–476 (GRAE…DVSH). Ser468 bears the Phosphoserine mark. The span at 481–491 (RSSARSRSSRA) shows a compositional bias: low complexity. Ser503 carries the post-translational modification Phosphoserine. Disordered regions lie at residues 538–623 (QAVR…QKNK) and 671–718 (ARQH…PPQP). Basic and acidic residues-rich tracts occupy residues 587–623 (YDTD…QKNK) and 690–699 (ESDKENKIQE). The stretch at 596–641 (IVRQQEERRRRQHEEKKAQKEATEQKNKRLQELYRRQREAFSKAKT) forms a coiled coil. Ser691 carries the phosphoserine modification. Over residues 701 to 714 (PPSASSSSDLSLSE) the composition is skewed to low complexity. Residues Ser874 and Ser935 each carry the phosphoserine modification. Residues 977 to 996 (SVSEGPLLSEGSLSEEEERR) form a disordered region. Residues 979–988 (SEGPLLSEGS) are compositionally biased toward low complexity. A Phosphoserine modification is found at Ser1057. Disordered regions lie at residues 1099–1128 (YEDD…GSSL) and 1151–1265 (QHSS…SQKL). Polar residues predominate over residues 1119–1128 (LESQVDGSSL). Residues 1153–1168 (SSGARSAGSTRSSSAS) are compositionally biased toward low complexity. The span at 1194–1206 (DEEKVQSDSERGS) shows a compositional bias: basic and acidic residues. Ser1200 is subject to Phosphoserine. A compositionally biased stretch (low complexity) spans 1251 to 1265 (QKTPTSPLSPSSQKL). Residue Thr1253 is modified to Phosphothreonine. Ser1256 and Ser1259 each carry phosphoserine. A coiled-coil region spans residues 1363-1402 (IKAQQQRHERDLALLKLKAEQEALECQRQLEETRNKTAQV). Disordered regions lie at residues 1490–1668 (AETD…GQDS), 1720–1739 (LRDK…QRGL), 1787–1864 (KLKS…QRRQ), and 1893–2017 (AWDK…PVKS). A compositionally biased stretch (basic and acidic residues) spans 1503 to 1513 (QSKEGAVDSKR). 2 stretches are compositionally biased toward low complexity: residues 1517 to 1526 (SPSRDSYSES) and 1536 to 1545 (SSGSSRQDSP). Over residues 1551–1564 (KENEKPFHGEKMES) the composition is skewed to basic and acidic residues. Position 1606 is a phosphoserine (Ser1606). The span at 1624-1640 (ESHRRFNMEKKRGHHDD) shows a compositional bias: basic and acidic residues. Residues Ser1641 and Ser1646 each carry the phosphoserine modification. Residues 1700 to 1793 (KALKEKTKAE…LQEKLKSAGE (94 aa)) are a coiled coil. The segment covering 1787–1796 (KLKSAGEKKL) has biased composition (basic and acidic residues). Ser1812 carries the post-translational modification Phosphoserine. The span at 1819 to 1835 (ETRSPSPISISSSETSS) shows a compositional bias: low complexity. 2 stretches are compositionally biased toward basic and acidic residues: residues 1845 to 1864 (SRMD…QRRQ) and 1894 to 1915 (WDKE…RTEQ). Positions 1850–1893 (KFLTKREQKLMQRRQHAEELLEWKRRLDAEEAEIQQMEKQALAA) form a coiled coil. Position 1930 is a phosphoserine (Ser1930). A compositionally biased stretch (low complexity) spans 1980–1994 (STSPSKHSPPKSCLS). Residues 1999–2011 (ESSKASHRTEGHC) show a composition bias toward basic and acidic residues. Residues 2043-2092 (IEGRIRALKDELRKRKSVVEQLKREQRKRQKERLKAQEASLLRQLETYDE) adopt a coiled-coil conformation. Ser2108 bears the Phosphoserine mark. Disordered regions lie at residues 2116–2155 (KTLS…GSLA), 2191–2265 (IEHL…VEDA), 2286–2427 (LSSK…EISE), and 2440–2471 (VHSE…GGTE). Residues 2133–2151 (HRSETAKTWKSVTESERSR) are compositionally biased toward basic and acidic residues. A Phosphoserine modification is found at Ser2198. 2 stretches are compositionally biased toward basic and acidic residues: residues 2202 to 2214 (SSRK…RDSL) and 2227 to 2259 (NAPD…KLES). The segment covering 2286 to 2300 (LSSKELPSDSANVQQ) has biased composition (polar residues). Basic and acidic residues predominate over residues 2301–2331 (DLDKPATETSHEKEEALKEDQSNHSTDDRSP). Residues 2349–2362 (DSTCSGQLSVPKES) show a composition bias toward polar residues. 2 stretches are compositionally biased toward basic and acidic residues: residues 2377-2387 (ISADEISKDDS) and 2395-2407 (LRKD…DRSQ). Positions 2409–2420 (TRSSRSRATGSG) are enriched in low complexity. A phosphoserine mark is found at Ser2421 and Ser2450. Residues 2455 to 2465 (MKSKERSDVGH) are compositionally biased toward basic and acidic residues. One can recognise a CAP-Gly domain in the interval 2504 to 2546 (GETDFAKGFWAGVELDKPEGNNNGTYDGIVYFVCKDKHGIFAP). Thr2671 is subject to Phosphothreonine. Residues 2700 to 2731 (LLDLLTREKNQLEAQLKSSISEEKKSKQQLET) are a coiled coil. A disordered region spans residues 2767 to 2793 (QEFLDQKKVPPQDLPQNTEEQSPSVPS). The segment covering 2780 to 2791 (LPQNTEEQSPSV) has biased composition (polar residues). Phosphoserine occurs at positions 2809 and 2818.

Part of a ternary complex that contains CEP350, CEP43 and MAPRE1. Interacts (via C-terminus) directly with CEP43 (via N-terminus). Interacts with NR1H3, PPARA, PPARD and PPARG. Interacts directly with microtubules. Interacts with the fusion protein CEP43-FGFR1, and by doing so recruits and activates PI3K and PLC-gamma. Interacts with CYLD. Interacts with CFAP157. Interacts with CEP19 (via C-terminus). Interacts with CEP78; promoting CEP78 localization to centrosome and centriole. Post-translationally, phosphorylated during mitosis.

The protein localises to the cytoplasm. It is found in the cytoskeleton. The protein resides in the microtubule organizing center. It localises to the centrosome. Its subcellular location is the spindle. The protein localises to the nucleus. It is found in the centriole. The protein resides in the cilium basal body. Functionally, plays an essential role in centriole growth by stabilizing a procentriolar seed composed of at least, SASS6 and CPAP. Required for anchoring microtubules to the centrosomes and for the integrity of the microtubule network. Recruits PPARA to discrete subcellular compartments and thereby modulates PPARA activity. Required for ciliation. The sequence is that of Centrosome-associated protein 350 from Mus musculus (Mouse).